Consider the following 378-residue polypeptide: Anhydro-N-acetylmuramic acid kinase (378 aa).

9 to 16 (GTSVDGID) is an ATP binding site.

The protein belongs to the anhydro-N-acetylmuramic acid kinase family.

The enzyme catalyses 1,6-anhydro-N-acetyl-beta-muramate + ATP + H2O = N-acetyl-D-muramate 6-phosphate + ADP + H(+). It functions in the pathway amino-sugar metabolism; 1,6-anhydro-N-acetylmuramate degradation. Its pathway is cell wall biogenesis; peptidoglycan recycling. Catalyzes the specific phosphorylation of 1,6-anhydro-N-acetylmuramic acid (anhMurNAc) with the simultaneous cleavage of the 1,6-anhydro ring, generating MurNAc-6-P. Is required for the utilization of anhMurNAc either imported from the medium or derived from its own cell wall murein, and thus plays a role in cell wall recycling. In Microcystis aeruginosa (strain NIES-843 / IAM M-2473), this protein is Anhydro-N-acetylmuramic acid kinase.